Reading from the N-terminus, the 421-residue chain is Divalent metal cation transporter MntH (421 aa).

11 consecutive transmembrane segments (helical) span residues 27–47, 51–71, 100–120, 128–148, 160–180, 201–221, 248–268, 289–309, 337–357, 358–378, and 396–416; these read LGPAFIVSVAYVDPGNFATNI, SLFDYHLIWVILWSNVIAIFL, WFLWITAELAAMATDLAEFLG, LFHIPMTYAAFLTGVVTFAIV, GIIFGLVAVISLAYAFELFIA, AMLIAVGILGATVMPHVIYLH, ILVAMNTAFIINAAMLIVSAA, PLLGVFSSWAFGIALLASGFS, LVTMVPAITIIALGIDPLKSL, IVSQVVLSFELPMAIIPLLLI, and IMGVLVASFVMILNGLLLYLT.

This sequence belongs to the NRAMP family.

The protein localises to the cell membrane. Functionally, h(+)-stimulated, divalent metal cation uptake system. The protein is Divalent metal cation transporter MntH of Caldanaerobacter subterraneus subsp. tengcongensis (strain DSM 15242 / JCM 11007 / NBRC 100824 / MB4) (Thermoanaerobacter tengcongensis).